The chain runs to 924 residues: Phosphatidate phosphatase LPIN1 (924 aa).

The interval 1–108 (MNYVGQLAGQ…IPMYLATSPI (108 aa)) is N-LIP. Phosphoserine occurs at positions 106 and 150. Disordered stretches follow at residues 133-248 (PTTA…DCQR) and 269-297 (FHASESPSGSRPSTPKSDSELVSKSADRL). Positions 152–161 (GKKRRKRRRK) are enriched in basic residues. The Nuclear localization signal signature appears at 153-158 (KKRRKR). Over residues 162 to 172 (AQLDNLKRDDN) the composition is skewed to basic and acidic residues. The span at 176 to 193 (SEDEDMFPIEMSSDEDTA) shows a compositional bias: acidic residues. Composition is skewed to polar residues over residues 218–229 (PSISTHPQSASY) and 273–284 (ESPSGSRPSTPK). 3 positions are modified to phosphoserine: serine 285, serine 287, and serine 293. Over residues 285–297 (SDSELVSKSADRL) the composition is skewed to basic and acidic residues. Residue threonine 298 is modified to Phosphothreonine. 2 disordered regions span residues 314–426 (QAAK…SRHL) and 446–490 (LYFP…STSD). Serine 328 carries the post-translational modification Phosphoserine. Residues 343–358 (AIHSESSDTFSDQSPT) show a composition bias toward polar residues. Position 392 is a phosphoserine (serine 392). A compositionally biased stretch (polar residues) spans 404–413 (NTAQSSSKTD). Lysine 459 bears the N6-acetyllysine mark. The segment covering 461–476 (ASDNGARSANQSPQSV) has biased composition (polar residues). A phosphoserine mark is found at serine 468, serine 472, and serine 483. Residues lysine 599 and lysine 629 each participate in a glycyl lysine isopeptide (Lys-Gly) (interchain with G-Cter in SUMO) cross-link. Residues 627 to 649 (RIKHESSSSDEEHAAAKPSGSSH) are disordered. Residues 628 to 641 (IKHESSSSDEEHAA) are compositionally biased toward basic and acidic residues. Lysine 629 carries the post-translational modification N6-acetyllysine. Phosphoserine occurs at positions 634 and 635. A C-LIP region spans residues 658-864 (YKKTLRLTSE…VNPKGELVQE (207 aa)). A DXDXT motif motif is present at residues 712 to 716 (DIDGT). The LXXIL motif signature appears at 723-727 (LGHIL). Residues serine 921 and serine 923 each carry the phosphoserine modification.

The protein belongs to the lipin family. As to quaternary structure, interacts (via LXXIL motif) with PPARA. Interacts with PPARGC1A. Interaction with PPARA and PPARGC1A leads to the formation of a complex that modulates gene transcription. Interacts with MEF2C. Mg(2+) serves as cofactor. Phosphorylated at multiple sites in response to insulin. Phosphorylation is controlled by the mTOR signaling pathway. Phosphorylation is decreased by epinephrine. Phosphorylation may not directly affect the catalytic activity but may regulate the localization. Dephosphorylated by the CTDNEP1-CNEP1R1 complex. In terms of processing, phosphorylated at multiple sites by mTOR in response to insulin, leading to its inactivation. Phosphorylation does not affect the catalytic activity but regulates the localization. Phosphorylation is decreased by epinephrine. Dephosphorylated by the CTDNEP1-CNEP1R1 complex. Dephosphorylation following mTOR inhibition promotes its activity. Post-translationally, sumoylation is important in brain and is marginal in other tissues. Sumoylation facilitates nuclear localization of isoform 2 in neuronals cells and its transcriptional coactivator activity. Acetylation at Lys-459 and Lys-629 by KAT5 in response to fatty acids promotes translocation to the endoplasmic reticulum and synthesis of diacylglycerol. Specifically expressed in skeletal muscle. Also expressed prominently in adipose tissue, and testis. Lower expression also detected in kidney, lung, brain and liver. As to expression, predominant isoform in the liver. In terms of tissue distribution, predominant isoform in the brain.

It is found in the mitochondrion outer membrane. It localises to the cytoplasm. The protein localises to the nucleus membrane. Its subcellular location is the nucleus. The protein resides in the endoplasmic reticulum membrane. It catalyses the reaction a 1,2-diacyl-sn-glycero-3-phosphate + H2O = a 1,2-diacyl-sn-glycerol + phosphate. The enzyme catalyses 1-octadecanoyl-2-(4Z,7Z,10Z,13Z,16Z,19Z-docosahexaenoyl)-sn-glycero-3-phosphate + H2O = 1-octadecanoyl-2-(4Z,7Z,10Z,13Z,16Z,19Z-docosahexaenoyl)-sn-glycerol + phosphate. The catalysed reaction is 1-octadecanoyl-2-(5Z,8Z,11Z,14Z-eicosatetraenoyl)-sn-glycero-3-phosphate + H2O = 1-octadecanoyl-2-(5Z,8Z,11Z,14Z-eicosatetraenoyl)-sn-glycerol + phosphate. It carries out the reaction 1-octadecanoyl-2-(9Z,12Z-octadecadienoyl)-sn-glycero-3-phosphate + H2O = 1-octadecanoyl-2-(9Z,12Z)-octadecadienoyl-sn-glycerol + phosphate. It catalyses the reaction 1-octadecanoyl-2-(9Z-octadecenoyl)-sn-glycero-3-phosphate + H2O = 1-octadecanoyl-2-(9Z-octadecenoyl)-sn-glycerol + phosphate. The enzyme catalyses 1-hexadecanoyl-2-(4Z,7Z,10Z,13Z,16Z,19Z-docosahexaenoyl)-sn-glycero-3-phosphate + H2O = 1-hexadecanoyl-2-(4Z,7Z,10Z,13Z,16Z,19Z-docosahexaenoyl)-sn-glycerol + phosphate. The catalysed reaction is 1,2-dioctadecanoyl-sn-glycero-3-phosphate + H2O = 1,2-dioctadecanoyl-sn-glycerol + phosphate. It carries out the reaction 1-hexadecanoyl-2-(5Z,8Z,11Z,14Z-eicosatetraenoyl)-sn-glycero-3-phosphate + H2O = 1-hexadecanoyl-2-(5Z,8Z,11Z,14Z-eicosatetraenoyl)-sn-glycerol + phosphate. It catalyses the reaction 1-hexadecanoyl-2-(9Z,12Z-octadecadienoyl)-sn-glycero-3-phosphate + H2O = 1-hexadecanoyl-2-(9Z,12Z-octadecadienoyl)-sn-glycerol + phosphate. The enzyme catalyses 1-hexadecanoyl-2-(9Z-octadecenoyl)-sn-glycero-3-phosphate + H2O = 1-hexadecanoyl-2-(9Z-octadecenoyl)-sn-glycerol + phosphate. The catalysed reaction is 1,2-di-(4Z,7Z,10Z,13Z,16Z,19Z-docosahexaenoyl)-sn-glycero-3-phosphate + H2O = 1,2-di-(4Z,7Z,10Z,13Z,16Z,19Z-docosahexaenoyl)-sn-glycerol + phosphate. It carries out the reaction 1,2-di-(5Z,8Z,11Z,14Z)-eicosatetraenoyl-sn-glycero-3-phosphate + H2O = 1,2-di-(5Z,8Z,11Z,14Z)-eicosatetraenoyl-sn-glycerol + phosphate. It catalyses the reaction 1,2-di-(9Z,12Z-octadecadienoyl)-sn-glycero-3-phosphate + H2O = 1,2-di-(9Z,12Z-octadecadienoyl)-sn-glycerol + phosphate. The enzyme catalyses 1,2-di-(9Z-octadecenoyl)-sn-glycero-3-phosphate + H2O = 1,2-di-(9Z-octadecenoyl)-sn-glycerol + phosphate. The catalysed reaction is 1,2-dihexadecanoyl-sn-glycero-3-phosphate + H2O = 1,2-dihexadecanoyl-sn-glycerol + phosphate. Its activity is regulated as follows. Inhibited by N-ethylmaleimide treatment. Acts as a magnesium-dependent phosphatidate phosphatase enzyme which catalyzes the conversion of phosphatidic acid to diacylglycerol during triglyceride, phosphatidylcholine and phosphatidylethanolamine biosynthesis and therefore controls the metabolism of fatty acids at different levels. Is involved in adipocyte differentiation. Also acts as nuclear transcriptional coactivator for PPARGC1A/PPARA regulatory pathway to modulate lipid metabolism gene expression. Its function is as follows. Recruited at the mitochondrion outer membrane and is involved in mitochondrial fission by converting phosphatidic acid to diacylglycerol. This is Phosphatidate phosphatase LPIN1 (Lpin1) from Mus musculus (Mouse).